We begin with the raw amino-acid sequence, 331 residues long: Type 2 lactosamine alpha-2,3-sialyltransferase (331 aa).

Residues M1–Y4 lie on the Cytoplasmic side of the membrane. Residues V5–G25 form a helical; Signal-anchor for type II membrane protein membrane-spanning segment. Topologically, residues T26 to N331 are lumenal. N-linked (GlcNAc...) asparagine glycans are attached at residues N129, N181, N295, N308, and N327.

Belongs to the glycosyltransferase 29 family.

The protein resides in the golgi apparatus membrane. The catalysed reaction is a neolactoside nLc4Cer(d18:1(4E)) + CMP-N-acetyl-beta-neuraminate = a neolactoside IV(3)-alpha-NeuAc-nLc4Cer(d18:1(4E)) + CMP + H(+). It carries out the reaction a beta-D-galactosyl-(1-&gt;4)-N-acetyl-beta-D-glucosaminyl derivative + CMP-N-acetyl-beta-neuraminate = an N-acetyl-alpha-neuraminyl-(2-&gt;3)-beta-D-galactosyl-(1-&gt;4)-N-acetyl-beta-D-glucosaminyl derivative + CMP + H(+). The enzyme catalyses a neolactoside nLc6Cer(d18:1(4E)) + CMP-N-acetyl-beta-neuraminate = a neolactoside VI(3)-alpha-NeuNAc-nLc6Cer(d18:1(4E)) + CMP + H(+). In terms of biological role, transfers the sialyl residue from CMP-N-acetyl-beta-neuraminate to the terminal galactose residue on sugar chains of glycoproteins and glycolipids. It's alpha-2,3-sialyltransferase activity is specific toward type II glycan chains (Galbeta1-4GlcNAc) on glycoproteins and glycolipids such as neolactosides nLc4Cer and nLc6Cer, whose sialyl-products serve as precursors for the Lewis X antigen. Critically involved in the synthesis of functional selectin ligands needed for neutrophil recruitment during inflammation and lymphocyte homing to the lymph nodes. The polypeptide is Type 2 lactosamine alpha-2,3-sialyltransferase (St3gal6) (Rattus norvegicus (Rat)).